The sequence spans 332 residues: NADH-quinone oxidoreductase subunit H (332 aa).

8 consecutive transmembrane segments (helical) span residues 11–31 (TYKI…IVWL), 77–97 (VIFI…WAVI), 110–130 (VGVL…IMGG), 156–176 (IGVI…NDII), 182–202 (LWFI…ALAE), 240–260 (NILL…LSPI), 268–288 (IPGA…FALV), and 307–327 (IFLP…FYFN).

The protein belongs to the complex I subunit 1 family. NDH-1 is composed of 14 different subunits. Subunits NuoA, H, J, K, L, M, N constitute the membrane sector of the complex.

It localises to the cell inner membrane. It carries out the reaction a quinone + NADH + 5 H(+)(in) = a quinol + NAD(+) + 4 H(+)(out). NDH-1 shuttles electrons from NADH, via FMN and iron-sulfur (Fe-S) centers, to quinones in the respiratory chain. The immediate electron acceptor for the enzyme in this species is believed to be ubiquinone. Couples the redox reaction to proton translocation (for every two electrons transferred, four hydrogen ions are translocated across the cytoplasmic membrane), and thus conserves the redox energy in a proton gradient. This subunit may bind ubiquinone. The protein is NADH-quinone oxidoreductase subunit H of Pelagibacter ubique (strain HTCC1062).